A 303-amino-acid polypeptide reads, in one-letter code: Monoglyceride lipase (303 aa).

At threonine 10 the chain carries Phosphothreonine. Tyrosine 58 carries the post-translational modification 3'-nitrotyrosine. The active-site Nucleophile is the serine 122. Residues aspartate 239 and histidine 269 each act as charge relay system in the active site.

It belongs to the AB hydrolase superfamily. Monoacylglycerol lipase family. As to quaternary structure, homodimer. As to expression, detected in adipose tissue, lung, liver, kidney, brain and heart.

The protein localises to the cytoplasm. It is found in the cytosol. The protein resides in the membrane. It catalyses the reaction Hydrolyzes glycerol monoesters of long-chain fatty acids.. The catalysed reaction is a 1-acylglycerol + H2O = glycerol + a fatty acid + H(+). The enzyme catalyses a 2-acylglycerol + H2O = glycerol + a fatty acid + H(+). It carries out the reaction 1-octanoylglycerol + H2O = octanoate + glycerol + H(+). It catalyses the reaction 2-(5Z,8Z,11Z,14Z-eicosatetraenoyl)-glycerol + H2O = glycerol + (5Z,8Z,11Z,14Z)-eicosatetraenoate + H(+). The catalysed reaction is 1-decanoylglycerol + H2O = decanoate + glycerol + H(+). The enzyme catalyses 1-dodecanoylglycerol + H2O = dodecanoate + glycerol + H(+). It carries out the reaction 1-tetradecanoylglycerol + H2O = tetradecanoate + glycerol + H(+). It catalyses the reaction 2-hexadecanoylglycerol + H2O = glycerol + hexadecanoate + H(+). The catalysed reaction is 1-(9Z-octadecenoyl)-glycerol + H2O = glycerol + (9Z)-octadecenoate + H(+). The enzyme catalyses 2-(9Z-octadecenoyl)-glycerol + H2O = glycerol + (9Z)-octadecenoate + H(+). It carries out the reaction 2-(9Z,12Z-octadecadienoyl)-glycerol + H2O = (9Z,12Z)-octadecadienoate + glycerol + H(+). It catalyses the reaction 1-(5Z,8Z,11Z,14Z-eicosatetraenoyl)-glycerol + H2O = glycerol + (5Z,8Z,11Z,14Z)-eicosatetraenoate + H(+). The catalysed reaction is 1-(9Z,12Z-octadecadienoyl)-glycerol + H2O = (9Z,12Z)-octadecadienoate + glycerol + H(+). The enzyme catalyses 1-hexadecanoylglycerol + H2O = glycerol + hexadecanoate + H(+). It carries out the reaction 1-octadecanoylglycerol + H2O = octadecanoate + glycerol + H(+). It catalyses the reaction prostaglandin E2 1-glyceryl ester + H2O = prostaglandin E2 + glycerol + H(+). The catalysed reaction is prostaglandin D2-1-glycerol ester + H2O = prostaglandin D2 + glycerol + H(+). The enzyme catalyses 2-glyceryl-15-deoxy-Delta(12,14)-prostaglandin J2 + H2O = 15-deoxy-Delta(12,14)-prostaglandin J2 + glycerol + H(+). It carries out the reaction prostaglandin F2alpha 1-glyceryl ester + H2O = prostaglandin F2alpha + glycerol + H(+). The protein operates within glycerolipid metabolism; triacylglycerol degradation. In terms of biological role, converts monoacylglycerides to free fatty acids and glycerol. Hydrolyzes the endocannabinoid 2-arachidonoylglycerol, and thereby contributes to the regulation of endocannabinoid signaling, nociperception and perception of pain. Regulates the levels of fatty acids that serve as signaling molecules and promote cancer cell migration, invasion and tumor growth. In Homo sapiens (Human), this protein is Monoglyceride lipase.